The primary structure comprises 947 residues: MDAALGPPEQMAELEEDLTPMMAQYYELCRQYDDALVLFQVGDFYEAFCAAAKRVARLCEITLTQREDSTGEYPMAGIPIDNAESYVETLLDAGYRVAIADQVEDPDEVSGVVERAVTRIVTPGTLTESELLGGADNNYVAALTAGERYGLALLDISTGDCYATSVGSESAVADELSRFGPAEAIVGPDVDVDRDAVFGPACLVTRYDADAFAQDRAEDRVGQYFGPPERLLAGGAEIRACGGLLAYAEYTRGSSGAVGPDGEPVDPDVDPAGTLDYLNHLTRYDPREYMLLDAVAVESLELFKRRSVRGHENRTLVDTVDETACALGRRKLTDWLRRPLLDADRIEARHGAVAELQRDPATREELSALLAEVYDLERLISRVSRGRANARDLRSLAATLSVVPDIRDHLADADARLLADLHATLDPLAETREEIEAAIRPDPPQQVTEGGVIREGYDEELDRLRSTEQSGKEWIDELEASERERTGIDSLKVGHTSVHGYYIEVTNANLDAVPEDYQRRQTLKNSERYYTPALKEREDEILRAESAADDLEYDLFCAVRDEVADEAERVQALADRLARLDVLVSFAEVAAQYDYCRPTVGSDGIDVTAGRHPVVERTEDAFIPNDTHLGSGPVPASRDGSDDGVTADDIQPFLAVVTGPNMSGKSTYMRQVALICLLAQSGSFVPAKAADLPILDRVFTRVGASDDIAGGRSTFMIEMTELATILDAATENSLVLLDEVGRGTSTADGLAIARAVTEYLHDEVGAYTLFATHHHDLTAVAAALSGATNRHFETSREDGDVRFDHELAPGPAAASYGVEVASMAGVPDSVVERSRDLLADAETADTGVEATRETEVASEPRPGTRADSETDSTATETTGPTENGAASAPAGEATSDDHAQEVFQTNGAAAEDELPESVAQQLASLDVATMTPIEAMNALADLQDRIE.

A disordered region spans residues 623 to 643; that stretch reads IPNDTHLGSGPVPASRDGSDD. An ATP-binding site is contributed by 659 to 666; that stretch reads GPNMSGKS. Positions 841–916 are disordered; it reads AETADTGVEA…GAAAEDELPE (76 aa).

The protein belongs to the DNA mismatch repair MutS family.

Functionally, this protein is involved in the repair of mismatches in DNA. It is possible that it carries out the mismatch recognition step. This protein has a weak ATPase activity. The chain is DNA mismatch repair protein MutS 2 from Haloarcula marismortui (strain ATCC 43049 / DSM 3752 / JCM 8966 / VKM B-1809) (Halobacterium marismortui).